We begin with the raw amino-acid sequence, 354 residues long: Putative ankyrin repeat protein L284 (354 aa).

ANK repeat units follow at residues 201-230 (ILDD…LSND), 253-284 (SRYP…NPIV), and 286-314 (LHKA…DIDI).

This chain is Putative ankyrin repeat protein L284, found in Acanthamoeba polyphaga (Amoeba).